The sequence spans 338 residues: Fructose-1,6-bisphosphatase class 1 (338 aa).

Glutamate 90, aspartate 112, leucine 114, and aspartate 115 together coordinate Mg(2+). Substrate-binding positions include 115–118 (DGSS), asparagine 207, and lysine 273. Glutamate 279 contacts Mg(2+).

The protein belongs to the FBPase class 1 family. In terms of assembly, homotetramer. Requires Mg(2+) as cofactor.

Its subcellular location is the cytoplasm. The enzyme catalyses beta-D-fructose 1,6-bisphosphate + H2O = beta-D-fructose 6-phosphate + phosphate. It functions in the pathway carbohydrate biosynthesis; gluconeogenesis. The protein is Fructose-1,6-bisphosphatase class 1 of Xanthomonas campestris pv. campestris (strain 8004).